Consider the following 291-residue polypeptide: N-acetylmannosamine kinase (291 aa).

ATP contacts are provided by residues 5–12 (AIDIGGTK) and 132–139 (GVGGGVVS). Zn(2+) contacts are provided by H156, C166, C168, and C173.

Belongs to the ROK (NagC/XylR) family. NanK subfamily. In terms of assembly, homodimer.

It carries out the reaction an N-acyl-D-mannosamine + ATP = an N-acyl-D-mannosamine 6-phosphate + ADP + H(+). The protein operates within amino-sugar metabolism; N-acetylneuraminate degradation; D-fructose 6-phosphate from N-acetylneuraminate: step 2/5. Functionally, catalyzes the phosphorylation of N-acetylmannosamine (ManNAc) to ManNAc-6-P. The polypeptide is N-acetylmannosamine kinase (Escherichia coli (strain ATCC 8739 / DSM 1576 / NBRC 3972 / NCIMB 8545 / WDCM 00012 / Crooks)).